Reading from the N-terminus, the 130-residue chain is Glycine cleavage system H protein (130 aa).

The Lipoyl-binding domain maps to 24–106 (IYSVGITEHA…YADGWLFRIR (83 aa)). An N6-lipoyllysine modification is found at Lys65.

The protein belongs to the GcvH family. In terms of assembly, the glycine cleavage system is composed of four proteins: P, T, L and H. Requires (R)-lipoate as cofactor.

In terms of biological role, the glycine cleavage system catalyzes the degradation of glycine. The H protein shuttles the methylamine group of glycine from the P protein to the T protein. In Pectobacterium carotovorum subsp. carotovorum (strain PC1), this protein is Glycine cleavage system H protein.